Consider the following 480-residue polypeptide: RNA-binding protein 42 (480 aa).

Residues 1–30 form a disordered region; it reads MAGAGPAPGLPGAGGPVVPGPGAGIPGKSG. Ala-2 is subject to N-acetylalanine. Residues 11–27 are compositionally biased toward gly residues; sequence PGAGGPVVPGPGAGIPG. Position 135 is a phosphoserine (Ser-135). An asymmetric dimethylarginine mark is found at Arg-153, Arg-158, Arg-168, and Arg-181. The segment at 236–480 is necessary for interaction with HNRNPK; that stretch reads ELGLGLGLGL…QKEKKKLGLR (245 aa). Residues 319–356 are disordered; that stretch reads SLRPRPRPPRPEPPPGLMALEVPEPLGEDKKKGKPEKL. The span at 345-356 shows a compositional bias: basic and acidic residues; the sequence is GEDKKKGKPEKL. An RRM domain is found at 381-459; it reads FRIFCGDLGN…RPIKLRKSMW (79 aa).

Belongs to the RRM RBM42 family. In terms of assembly, interacts with HNRNPK.

It is found in the nucleus. Its subcellular location is the cytoplasm. Binds (via the RRM domain) to the 3'-untranslated region (UTR) of CDKN1A mRNA. The chain is RNA-binding protein 42 (RBM42) from Homo sapiens (Human).